The primary structure comprises 339 residues: Anthranilate phosphoribosyltransferase (339 aa).

Residues Gly86, 89–90 (GD), Thr94, 96–99 (NIST), 114–122 (KHGNRGVSS), and Ser126 each bind 5-phospho-alpha-D-ribose 1-diphosphate. An anthranilate-binding site is contributed by Gly86. Ser98 provides a ligand contact to Mg(2+). Asn117 lines the anthranilate pocket. An anthranilate-binding site is contributed by Arg172. Asp230 and Glu231 together coordinate Mg(2+).

It belongs to the anthranilate phosphoribosyltransferase family. In terms of assembly, homodimer. Requires Mg(2+) as cofactor.

The catalysed reaction is N-(5-phospho-beta-D-ribosyl)anthranilate + diphosphate = 5-phospho-alpha-D-ribose 1-diphosphate + anthranilate. It functions in the pathway amino-acid biosynthesis; L-tryptophan biosynthesis; L-tryptophan from chorismate: step 2/5. Functionally, catalyzes the transfer of the phosphoribosyl group of 5-phosphorylribose-1-pyrophosphate (PRPP) to anthranilate to yield N-(5'-phosphoribosyl)-anthranilate (PRA). The protein is Anthranilate phosphoribosyltransferase of Photobacterium profundum (strain SS9).